Consider the following 541-residue polypeptide: MKNKENILITLNQVGIEQYSNIIYNPNYDTLFKEETNKNLKGLERCILTKLQAIAVDTGKFTGRSPKDKYYVRDEKTKNIIWWSDDNNHKSNNHPINNETWKDLKKLIANNLNNKKLFVIDAFCGANKKNRLKVRFITDIAWQAHFFKNMFIEPIEQELNKFLQDFTVFSVPKAINKKWKDHKLNSENFIAINLTENTLLIGGTWYGGEIKKGLFSVMNYILPLKNIASMHCSANEGFKKDVALFFGLSGTGKTTLSTDSKRYLIGDDEHGWCKDGVFNFEGGCYAKTINLSEEKEPEIFNAIKKNAILENVMVLKDSNINFFDGTKTENSRVSYPINHIKNIVKPISQSGHPKNIIFLTADAFGVFPFVSKLSYFQGQYYFLSGFTSKLSGTERGIIDPEPTFSSCFGEAFLSLHPTVYAKILLRYIKYYNSKIFLVNTGWNGKRERYSLEYTRSIINAILDDKIEFIDENYIPIFNLKIPKKIEGVPDLFLDPRNFFSSNEEWIKQATILSKKFIKNFKKFSHTKLGKKLIKFEPKINF.

Positions 64, 206, and 212 each coordinate substrate. Residues K212, H231, and 247–255 (GLSGTGKTT) each bind ATP. Residues K212 and H231 each coordinate Mn(2+). D268 contributes to the Mn(2+) binding site. ATP contacts are provided by E296, R332, and T454. A substrate-binding site is contributed by R332.

It belongs to the phosphoenolpyruvate carboxykinase (ATP) family. As to quaternary structure, monomer. Mn(2+) is required as a cofactor.

It is found in the cytoplasm. It catalyses the reaction oxaloacetate + ATP = phosphoenolpyruvate + ADP + CO2. It participates in carbohydrate biosynthesis; gluconeogenesis. Its function is as follows. Involved in the gluconeogenesis. Catalyzes the conversion of oxaloacetate (OAA) to phosphoenolpyruvate (PEP) through direct phosphoryl transfer between the nucleoside triphosphate and OAA. This is Phosphoenolpyruvate carboxykinase (ATP) from Wigglesworthia glossinidia brevipalpis.